We begin with the raw amino-acid sequence, 296 residues long: Bifunctional protein FolD (296 aa).

NADP(+) is bound by residues 166–168 (GRS), Ser-195, and Thr-236.

This sequence belongs to the tetrahydrofolate dehydrogenase/cyclohydrolase family. Homodimer.

It carries out the reaction (6R)-5,10-methylene-5,6,7,8-tetrahydrofolate + NADP(+) = (6R)-5,10-methenyltetrahydrofolate + NADPH. It catalyses the reaction (6R)-5,10-methenyltetrahydrofolate + H2O = (6R)-10-formyltetrahydrofolate + H(+). It functions in the pathway one-carbon metabolism; tetrahydrofolate interconversion. Catalyzes the oxidation of 5,10-methylenetetrahydrofolate to 5,10-methenyltetrahydrofolate and then the hydrolysis of 5,10-methenyltetrahydrofolate to 10-formyltetrahydrofolate. In Dehalococcoides mccartyi (strain ATCC BAA-2100 / JCM 16839 / KCTC 5957 / BAV1), this protein is Bifunctional protein FolD.